A 142-amino-acid polypeptide reads, in one-letter code: Transcriptional regulator MraZ (142 aa).

2 SpoVT-AbrB domains span residues 5 to 51 (ASSL…PRTE) and 77 to 120 (AMDV…DKAT).

Belongs to the MraZ family. In terms of assembly, forms oligomers.

The protein resides in the cytoplasm. Its subcellular location is the nucleoid. The chain is Transcriptional regulator MraZ from Delftia acidovorans (strain DSM 14801 / SPH-1).